The chain runs to 362 residues: MESTLSAQNIRRLLANETPIIDVRAPIEFNQGAMPNAINLPLMNNEERAAVGTCYKQHGSQKAVELGHQLVKGEIKAHRVAAWREACERFPSGFICCARGGMRSHIVQKWLAEIGIDYPLIEGGYKALRQATIEMTNELVQRPIILIGGCTGNGKTTLVRSLPEGIDLEGFAHHRGSSFGRTVEAQFAQATFENYLAVDMLKKSSYHSRWVLEDEGRAIGANGLPESLRIQMATAHLVVVDDPFERRMARLKEEYFDRMTHDFIEAYGEEKGWQEYSDYLHHGLYAIRRRLGAQRAAELTQLLDNALAAQKISANTEVHFSWLSPLLKEYYDPMYRYQLSKKQDKIIYTGSYEEVEQWFANH.

The region spanning 14 to 137 is the Rhodanese domain; that stretch reads LANETPIIDV…LRQATIEMTN (124 aa). Catalysis depends on Cys97, which acts as the S-selanylcysteine intermediate.

It belongs to the SelU family. In terms of assembly, monomer.

The enzyme catalyses 5-methylaminomethyl-2-thiouridine(34) in tRNA + selenophosphate + (2E)-geranyl diphosphate + H2O + H(+) = 5-methylaminomethyl-2-selenouridine(34) in tRNA + (2E)-thiogeraniol + phosphate + diphosphate. It catalyses the reaction 5-methylaminomethyl-2-thiouridine(34) in tRNA + (2E)-geranyl diphosphate = 5-methylaminomethyl-S-(2E)-geranyl-thiouridine(34) in tRNA + diphosphate. It carries out the reaction 5-methylaminomethyl-S-(2E)-geranyl-thiouridine(34) in tRNA + selenophosphate + H(+) = 5-methylaminomethyl-2-(Se-phospho)selenouridine(34) in tRNA + (2E)-thiogeraniol. The catalysed reaction is 5-methylaminomethyl-2-(Se-phospho)selenouridine(34) in tRNA + H2O = 5-methylaminomethyl-2-selenouridine(34) in tRNA + phosphate. Functionally, involved in the post-transcriptional modification of the uridine at the wobble position (U34) of tRNA(Lys), tRNA(Glu) and tRNA(Gln). Catalyzes the conversion of 2-thiouridine (S2U-RNA) to 2-selenouridine (Se2U-RNA). Acts in a two-step process involving geranylation of 2-thiouridine (S2U) to S-geranyl-2-thiouridine (geS2U) and subsequent selenation of the latter derivative to 2-selenouridine (Se2U) in the tRNA chain. The protein is tRNA 2-selenouridine synthase of Proteus mirabilis (strain HI4320).